A 527-amino-acid polypeptide reads, in one-letter code: Glucose-6-phosphate isomerase (527 aa).

The active-site Proton donor is the Glu323. Residues His352 and Lys454 contribute to the active site.

This sequence belongs to the GPI family.

The protein resides in the cytoplasm. The catalysed reaction is alpha-D-glucose 6-phosphate = beta-D-fructose 6-phosphate. It participates in carbohydrate biosynthesis; gluconeogenesis. It functions in the pathway carbohydrate degradation; glycolysis; D-glyceraldehyde 3-phosphate and glycerone phosphate from D-glucose: step 2/4. Catalyzes the reversible isomerization of glucose-6-phosphate to fructose-6-phosphate. The sequence is that of Glucose-6-phosphate isomerase from Prochlorococcus marinus (strain MIT 9301).